The following is a 539-amino-acid chain: Chaperonin GroEL (539 aa).

ATP-binding positions include 29–32, 86–90, Gly413, 476–478, and Asp492; these read TIGP, DGTTT, and NAA.

It belongs to the chaperonin (HSP60) family. In terms of assembly, forms a cylinder of 14 subunits composed of two heptameric rings stacked back-to-back. Interacts with the co-chaperonin GroES.

Its subcellular location is the cytoplasm. It carries out the reaction ATP + H2O + a folded polypeptide = ADP + phosphate + an unfolded polypeptide.. In terms of biological role, together with its co-chaperonin GroES, plays an essential role in assisting protein folding. The GroEL-GroES system forms a nano-cage that allows encapsulation of the non-native substrate proteins and provides a physical environment optimized to promote and accelerate protein folding. The chain is Chaperonin GroEL from Staphylococcus epidermidis (strain ATCC 12228 / FDA PCI 1200).